The sequence spans 227 residues: MPYPLQLGLQDATSPIMEELTHFHDHTLMIVFLISSLVLYIISSMLTTKLTHTSTMDAQEVETIWTILPAMILILIALPSLRILYMMDEINDPSLTVKTMGHQWYWSYEYTDYEDLTFDSYMIPTNDLEPGQLRLLEVDNRVVLPMEMPIRMLISSEDVLHSWAIPSMGLKTDAIPGRLNQATLMSSRPGLFYGQCSEICGSNHSFMPIVLELVPLKYFEDWSASLL.

Residues 1–14 (MPYPLQLGLQDATS) lie on the Mitochondrial intermembrane side of the membrane. Residues 15–45 (PIMEELTHFHDHTLMIVFLISSLVLYIISSM) traverse the membrane as a helical segment. The Mitochondrial matrix portion of the chain corresponds to 46 to 59 (LTTKLTHTSTMDAQ). A helical transmembrane segment spans residues 60-87 (EVETIWTILPAMILILIALPSLRILYMM). At 88–227 (DEINDPSLTV…YFEDWSASLL (140 aa)) the chain is on the mitochondrial intermembrane side. Histidine 161, cysteine 196, glutamate 198, cysteine 200, histidine 204, and methionine 207 together coordinate Cu cation. Glutamate 198 is a binding site for Mg(2+).

The protein belongs to the cytochrome c oxidase subunit 2 family. As to quaternary structure, component of the cytochrome c oxidase (complex IV, CIV), a multisubunit enzyme composed of 14 subunits. The complex is composed of a catalytic core of 3 subunits MT-CO1, MT-CO2 and MT-CO3, encoded in the mitochondrial DNA, and 11 supernumerary subunits COX4I, COX5A, COX5B, COX6A, COX6B, COX6C, COX7A, COX7B, COX7C, COX8 and NDUFA4, which are encoded in the nuclear genome. The complex exists as a monomer or a dimer and forms supercomplexes (SCs) in the inner mitochondrial membrane with NADH-ubiquinone oxidoreductase (complex I, CI) and ubiquinol-cytochrome c oxidoreductase (cytochrome b-c1 complex, complex III, CIII), resulting in different assemblies (supercomplex SCI(1)III(2)IV(1) and megacomplex MCI(2)III(2)IV(2)). Found in a complex with TMEM177, COA6, COX18, COX20, SCO1 and SCO2. Interacts with TMEM177 in a COX20-dependent manner. Interacts with COX20. Interacts with COX16. The cofactor is Cu cation.

Its subcellular location is the mitochondrion inner membrane. It carries out the reaction 4 Fe(II)-[cytochrome c] + O2 + 8 H(+)(in) = 4 Fe(III)-[cytochrome c] + 2 H2O + 4 H(+)(out). Functionally, component of the cytochrome c oxidase, the last enzyme in the mitochondrial electron transport chain which drives oxidative phosphorylation. The respiratory chain contains 3 multisubunit complexes succinate dehydrogenase (complex II, CII), ubiquinol-cytochrome c oxidoreductase (cytochrome b-c1 complex, complex III, CIII) and cytochrome c oxidase (complex IV, CIV), that cooperate to transfer electrons derived from NADH and succinate to molecular oxygen, creating an electrochemical gradient over the inner membrane that drives transmembrane transport and the ATP synthase. Cytochrome c oxidase is the component of the respiratory chain that catalyzes the reduction of oxygen to water. Electrons originating from reduced cytochrome c in the intermembrane space (IMS) are transferred via the dinuclear copper A center (CU(A)) of subunit 2 and heme A of subunit 1 to the active site in subunit 1, a binuclear center (BNC) formed by heme A3 and copper B (CU(B)). The BNC reduces molecular oxygen to 2 water molecules using 4 electrons from cytochrome c in the IMS and 4 protons from the mitochondrial matrix. The sequence is that of Cytochrome c oxidase subunit 2 (MT-CO2) from Dugong dugon (Dugong).